The sequence spans 311 residues: Ribosomal protein L11 methyltransferase (311 aa).

S-adenosyl-L-methionine is bound by residues Thr-162, Gly-183, Asp-205, and Asn-248.

The protein belongs to the methyltransferase superfamily. PrmA family.

The protein localises to the cytoplasm. The enzyme catalyses L-lysyl-[protein] + 3 S-adenosyl-L-methionine = N(6),N(6),N(6)-trimethyl-L-lysyl-[protein] + 3 S-adenosyl-L-homocysteine + 3 H(+). Functionally, methylates ribosomal protein L11. The polypeptide is Ribosomal protein L11 methyltransferase (Bacillus licheniformis (strain ATCC 14580 / DSM 13 / JCM 2505 / CCUG 7422 / NBRC 12200 / NCIMB 9375 / NCTC 10341 / NRRL NRS-1264 / Gibson 46)).